Reading from the N-terminus, the 252-residue chain is dITP/XTP pyrophosphatase (252 aa).

7–12 (THNEGK) lines the substrate pocket. The active-site Proton acceptor is Asp74. A Mg(2+)-binding site is contributed by Asp74. Substrate contacts are provided by residues Ser75 and 193–196 (FGYD). Positions 201-224 (PDDQPAGRVSTEPDHEGEPLTSAE) are disordered. Residues Lys230 and 235–236 (HR) each bind substrate.

Belongs to the HAM1 NTPase family. In terms of assembly, homodimer. The cofactor is Mg(2+).

The enzyme catalyses XTP + H2O = XMP + diphosphate + H(+). It carries out the reaction dITP + H2O = dIMP + diphosphate + H(+). The catalysed reaction is ITP + H2O = IMP + diphosphate + H(+). Pyrophosphatase that catalyzes the hydrolysis of nucleoside triphosphates to their monophosphate derivatives, with a high preference for the non-canonical purine nucleotides XTP (xanthosine triphosphate), dITP (deoxyinosine triphosphate) and ITP. Seems to function as a house-cleaning enzyme that removes non-canonical purine nucleotides from the nucleotide pool, thus preventing their incorporation into DNA/RNA and avoiding chromosomal lesions. This chain is dITP/XTP pyrophosphatase, found in Bifidobacterium longum subsp. infantis (strain ATCC 15697 / DSM 20088 / JCM 1222 / NCTC 11817 / S12).